We begin with the raw amino-acid sequence, 317 residues long: L-lactate dehydrogenase (317 aa).

Residues valine 17, aspartate 38, lysine 43, tyrosine 69, and 83–84 (GA) each bind NAD(+). Residues glutamine 86 and arginine 92 each contribute to the substrate site. NAD(+) is bound by residues serine 105, 122–124 (ATN), and serine 147. Position 124–127 (124–127 (NPVD)) interacts with substrate. 152 to 155 (DTAR) is a binding site for substrate. Positions 157 and 172 each coordinate beta-D-fructose 1,6-bisphosphate. Catalysis depends on histidine 179, which acts as the Proton acceptor. At tyrosine 224 the chain carries Phosphotyrosine. Threonine 233 contributes to the substrate binding site.

This sequence belongs to the LDH/MDH superfamily. LDH family. In terms of assembly, homotetramer.

The protein localises to the cytoplasm. The enzyme catalyses (S)-lactate + NAD(+) = pyruvate + NADH + H(+). It functions in the pathway fermentation; pyruvate fermentation to lactate; (S)-lactate from pyruvate: step 1/1. With respect to regulation, allosterically activated by fructose 1,6-bisphosphate (FBP). In terms of biological role, catalyzes the conversion of lactate to pyruvate. This Bacillus caldolyticus protein is L-lactate dehydrogenase.